A 493-amino-acid polypeptide reads, in one-letter code: Xylulose kinase (493 aa).

Residue 84–85 (QH) coordinates substrate. Aspartate 247 (proton acceptor) is an active-site residue.

The protein belongs to the FGGY kinase family.

It carries out the reaction D-xylulose + ATP = D-xylulose 5-phosphate + ADP + H(+). In terms of biological role, catalyzes the phosphorylation of D-xylulose to D-xylulose 5-phosphate. This chain is Xylulose kinase, found in Haemophilus influenzae (strain ATCC 51907 / DSM 11121 / KW20 / Rd).